Consider the following 175-residue polypeptide: Protein UPS1, mitochondrial (175 aa).

Positions 1 to 80 (MVLLHKSTHI…RGITETWIIE (80 aa)) are required for mitochondrial targeting. A PRELI/MSF1 domain is found at 2–172 (VLLHKSTHIF…VIQKLEEARN (171 aa)). 4 residues coordinate a 1,2-diacyl-sn-glycero-3-phosphate: Tyr-26, Lys-58, Lys-148, and Asn-152.

Belongs to the slowmo family. Interacts with MDM35. Found associated with a 170 kDa complex.

Its subcellular location is the mitochondrion inner membrane. The protein resides in the mitochondrion intermembrane space. Functionally, required for maintenance of normal mitochondrial morphology. Required for PCP1-dependent processing of MGM1. The UPS1:MDM35 complex mediates the transfer of phosphatidic acid (PA) between liposomes and probably functions as a PA transporter across the mitochondrion intermembrane space. Phosphatidic acid release requires dissociation of the UPS1:MDM35 complex. Phosphatidic acid import is required for cardiolipin (CL) synthesis in the mitochondrial inner membrane. With UPS2, controls the level of cardiolipin in mitochondria. Cardiolipin is a unique phospholipid with four fatty acid chains and is present mainly in the mitochondrial inner membrane where it stabilizes the electron transport chain supercomplex between complexes III and IV through direct interaction of their subunits. In Saccharomyces cerevisiae (strain ATCC 204508 / S288c) (Baker's yeast), this protein is Protein UPS1, mitochondrial (UPS1).